We begin with the raw amino-acid sequence, 470 residues long: Pyoverdine export outer membrane protein OpmQ (470 aa).

The N-terminal stretch at 1-18 (MTLPRHLCLLPLSLSLLA) is a signal peptide. A lipid anchor (N-palmitoyl cysteine) is attached at Cys19. A lipid anchor (S-diacylglycerol cysteine) is attached at Cys19.

Belongs to the outer membrane factor (OMF) (TC 1.B.17) family. In terms of assembly, part of the tripartite efflux system PvdRT-OpmQ, which is composed of an inner membrane component with both ATPase and permease domains, PvdT, a periplasmic membrane fusion protein, PvdR, and an outer membrane component, OpmQ.

It is found in the cell outer membrane. Its function is as follows. Part of the tripartite efflux system PvdRT-OpmQ required for the secretion into the extracellular milieu of the siderophore pyoverdine (PVD), which is involved in iron acquisition. The system is responsible for export of newly synthesized PVD after the final steps of biosynthesis have taken place in the periplasm. It is also responsible for recycling of PVD after internalization of ferri-PVD into the periplasm by the outer-membrane receptor FpvA and release of iron from PVD, thus making PVD available for new cycles of iron uptake. Contributes to resistance against ampicillin. This is Pyoverdine export outer membrane protein OpmQ from Pseudomonas putida (strain ATCC 47054 / DSM 6125 / CFBP 8728 / NCIMB 11950 / KT2440).